We begin with the raw amino-acid sequence, 508 residues long: CUGBP Elav-like family member 2 (508 aa).

2 necessary for RNA-binding, TNNT2 exon 5 and NMDA R1 exon 21 inclusion regions span residues Met-1 to Leu-283 and Leu-357 to Tyr-508. RRM domains are found at residues Ile-40–Ser-123, Arg-132–Thr-212, and Ala-423–Ser-501.

Belongs to the CELF/BRUNOL family. As to quaternary structure, interacts with A1CF. As to expression, expressed in frontal cortex. Isoform 1 is expressed in brain and lung. Isoform 2 is expressed in heart, brain, placenta, lung, liver, kidney, skeletal muscle and pancreas. Isoform 4 is expressed in heart, lung, skeletal muscle, kidney and pancreas.

The protein resides in the nucleus. It localises to the cytoplasm. RNA-binding protein implicated in the regulation of several post-transcriptional events. Involved in pre-mRNA alternative splicing, mRNA translation and stability. Mediates exon inclusion and/or exclusion in pre-mRNA that are subject to tissue-specific and developmentally regulated alternative splicing. Specifically activates exon 5 inclusion of TNNT2 in embryonic, but not adult, skeletal muscle. Activates TNNT2 exon 5 inclusion by antagonizing the repressive effect of PTB. Acts both as an activator and as a repressor of a pair of coregulated exons: promotes inclusion of the smooth muscle (SM) exon but exclusion of the non-muscle (NM) exon in actinin pre-mRNAs. Promotes inclusion of exonS 21 and exclusion of exon 5 of the NMDA receptor R1 pre-mRNA. Involved in the apoB RNA editing activity. Increases COX2 mRNA stability and inhibits COX2 mRNA translation in epithelial cells after radiation injury. Modulates the cellular apoptosis program by regulating COX2-mediated prostaglandin E2 (PGE2) expression. Binds to (CUG)n triplet repeats in the 3'-UTR of transcripts such as DMPK. Binds to the muscle-specific splicing enhancer (MSE) intronic sites flanking the TNNT2 alternative exon 5. Binds preferentially to UG-rich sequences, in particular UG repeat and UGUU motifs. Binds to apoB mRNA, specifically to AU-rich sequences located immediately upstream of the edited cytidine. Binds AU-rich sequences in the 3'-UTR of COX2 mRNA. Binds to an intronic RNA element responsible for the silencing of exon 21 splicing. Binds to (CUG)n repeats. May be a specific regulator of miRNA biogenesis. Binds to primary microRNA pri-MIR140 and, with CELF1, negatively regulates the processing to mature miRNA. The chain is CUGBP Elav-like family member 2 (CELF2) from Homo sapiens (Human).